Here is a 448-residue protein sequence, read N- to C-terminus: Trigger factor (448 aa).

Residues 172–257 (GDRVTVDFVG…MKKIEWPHLP (86 aa)) form the PPIase FKBP-type domain.

It belongs to the FKBP-type PPIase family. Tig subfamily.

The protein localises to the cytoplasm. The enzyme catalyses [protein]-peptidylproline (omega=180) = [protein]-peptidylproline (omega=0). Functionally, involved in protein export. Acts as a chaperone by maintaining the newly synthesized protein in an open conformation. Functions as a peptidyl-prolyl cis-trans isomerase. The sequence is that of Trigger factor from Paraburkholderia xenovorans (strain LB400).